A 579-amino-acid polypeptide reads, in one-letter code: SLAIN motif-containing protein 1 (579 aa).

Disordered regions lie at residues 1–21 (MMAE…GPGP), 60–95 (LLLQ…GPGA), 135–162 (GGGG…PPTL), 233–258 (YTSR…LEDD), 289–313 (STSA…TCSD), and 347–454 (IPHS…PGQI). Residues 9–21 (ASPVAASGAGPGP) are compositionally biased toward low complexity. The stretch at 21-56 (PVVNAELEVKKLQELVRKLEKQNEQLRSRAASAAAA) forms a coiled coil. Residues 63 to 73 (QPPPPSAPPPA) show a composition bias toward pro residues. The segment covering 141–154 (EPGTAGTPPGEAAT) has biased composition (low complexity). A compositionally biased stretch (polar residues) spans 233–243 (YTSRGSPLSPQ). A Phosphoserine modification is found at S241. Low complexity-rich tracts occupy residues 244 to 253 (SSIDSELSTS) and 289 to 305 (STSA…SLSS). Residues 362-373 (SPSTQYFPSNNF) are compositionally biased toward polar residues. The span at 374–390 (QQPQYYPPQAQTADQQP) shows a compositional bias: low complexity. Positions 412 to 432 (AAASSNLSSPVTVRSSQSFDS) are enriched in polar residues. At R469 the chain carries Asymmetric dimethylarginine. Positions 479-516 (SPTVQGSSSSGSSGSSGGSGSGMPLSNGTQLYSTTGIP) are disordered. Residues 502–516 (PLSNGTQLYSTTGIP) show a composition bias toward polar residues. An Asymmetric dimethylarginine modification is found at R554.

This sequence belongs to the SLAIN motif-containing family. As to quaternary structure, interacts with MAPRE1, MAPRE2, MAPRE3 and CKAP5. Interacts with ZDHHC17 (via ANK repeats). Expressed in embryonic stem cells. Expressed in adult bone marrow, brain, kidney, lung, testis and thymus. Expressed in colon. Isoform 1 is highly expressed in brain. Isoform 2 is more widely expressed in bone marrow, brain, colon, kidney, lung and thymus.

The protein localises to the cytoplasm. The protein resides in the cytoskeleton. Functionally, microtubule plus-end tracking protein that might be involved in the regulation of cytoplasmic microtubule dynamics, microtubule organization and microtubule elongation. The polypeptide is SLAIN motif-containing protein 1 (Slain1) (Mus musculus (Mouse)).